The sequence spans 760 residues: Exostosin-1 (760 aa).

Over 1-6 the chain is Cytoplasmic; it reads MQAKKR. The helical; Signal-anchor for type II membrane protein transmembrane segment at 7-25 threads the bilayer; sequence YILVFVSCAFLAYAYFGGY. The Lumenal portion of the chain corresponds to 26 to 760; the sequence is RLKVSPLRPR…KYRQIELVGS (735 aa). N-linked (GlcNAc...) asparagine glycans are attached at residues asparagine 71 and asparagine 327. A UDP-N-acetyl-alpha-D-glucosamine-binding site is contributed by arginine 437. Asparagine 476 carries an N-linked (GlcNAc...) asparagine glycan. The interval 540 to 560 is disordered; the sequence is LGGSTRSQGAGPTSQTTEGRP. Over residues 541 to 560 the composition is skewed to polar residues; sequence GGSTRSQGAGPTSQTTEGRP. Residues arginine 565, aspartate 581, glutamate 582, aspartate 583, glutamate 669, aspartate 670, and arginine 713 each coordinate UDP-N-acetyl-alpha-D-glucosamine. Residue aspartate 583 coordinates Mn(2+). The cysteines at positions 668 and 716 are disulfide-linked. Aspartate 670 is a catalytic residue.

This sequence belongs to the glycosyltransferase 47 family. Interacts with sau. It depends on Mn(2+) as a cofactor. Ubiquitously expressed in early embryos. Later (in stage 10 embryos), it is expressed at higher level in the nervous system. Ubiquitously expressed in wing imaginal disk.

It localises to the endoplasmic reticulum membrane. It is found in the golgi apparatus membrane. It carries out the reaction 3-O-{[(1-&gt;4)-beta-D-GlcA-(1-&gt;4)-alpha-D-GlcNAc](n)-(1-&gt;4)-beta-D-GlcA-(1-&gt;3)-beta-D-Gal-(1-&gt;3)-beta-D-Gal-(1-&gt;4)-beta-D-Xyl}-L-seryl-[protein] + UDP-N-acetyl-alpha-D-glucosamine = 3-O-{alpha-D-GlcNAc-[(1-&gt;4)-beta-D-GlcA-(1-&gt;4)-alpha-D-GlcNAc](n)-(1-&gt;4)-beta-D-GlcA-(1-&gt;3)-beta-D-Gal-(1-&gt;3)-beta-D-Gal-(1-&gt;4)-beta-D-Xyl}-L-seryl-[protein] + UDP + H(+). The enzyme catalyses 3-O-{alpha-D-GlcNAc-[(1-&gt;4)-beta-D-GlcA-(1-&gt;4)-alpha-D-GlcNAc](n)-(1-&gt;4)-beta-D-GlcA-(1-&gt;3)-beta-D-Gal-(1-&gt;3)-beta-D-Gal-(1-&gt;4)-beta-D-Xyl}-L-seryl-[protein] + UDP-alpha-D-glucuronate = 3-O-{[(1-&gt;4)-beta-D-GlcA-(1-&gt;4)-alpha-D-GlcNAc](n+1)-(1-&gt;4)-beta-D-GlcA-(1-&gt;3)-beta-D-Gal-(1-&gt;3)-beta-D-Gal-(1-&gt;4)-beta-D-Xyl}-L-seryl-[protein] + UDP + H(+). It participates in protein modification; protein glycosylation. The protein operates within glycan metabolism; heparan sulfate biosynthesis. It functions in the pathway glycan metabolism; heparin biosynthesis. In terms of biological role, glycosyltransferase required for the biosynthesis of heparan-sulfate and responsible for the alternating addition of beta-1-4-linked glucuronic acid (GlcA) and alpha-1-4-linked N-acetylglucosamine (GlcNAc) units to nascent heparan sulfate chains. Botv is the trigger of heparan sulfate chain initiation and polymerization takes place by a complex of ttv and sotv. Plays a central role in the diffusion of morphogens hedgehog (hh), wingless (wg) and decapentaplegic (dpp) via its role in heparan sulfate proteoglycans (HSPGs) biosynthesis which are required for movement of hh, dpp and wg morphogens. The chain is Exostosin-1 (ttv) from Drosophila melanogaster (Fruit fly).